Here is a 405-residue protein sequence, read N- to C-terminus: Elongation factor Tu (405 aa).

The tr-type G domain maps to 10–215 (KPHVNVGTIG…AIDAYIPTPE (206 aa)). A G1 region spans residues 19-26 (GHVDHGKT). Residue 19–26 (GHVDHGKT) coordinates GTP. Thr26 is a Mg(2+) binding site. The segment at 61-65 (GITIN) is G2. The G3 stretch occupies residues 82–85 (DCPG). Residues 82–86 (DCPGH) and 137–140 (NKVD) contribute to the GTP site. Residues 137 to 140 (NKVD) are G4. Residues 175–177 (SAL) form a G5 region.

It belongs to the TRAFAC class translation factor GTPase superfamily. Classic translation factor GTPase family. EF-Tu/EF-1A subfamily. Monomer.

It is found in the cytoplasm. It carries out the reaction GTP + H2O = GDP + phosphate + H(+). Functionally, GTP hydrolase that promotes the GTP-dependent binding of aminoacyl-tRNA to the A-site of ribosomes during protein biosynthesis. This chain is Elongation factor Tu, found in Deinococcus geothermalis (strain DSM 11300 / CIP 105573 / AG-3a).